We begin with the raw amino-acid sequence, 269 residues long: Small ribosomal subunit protein eS1 (269 aa).

The interval M1–K20 is disordered.

It belongs to the eukaryotic ribosomal protein eS1 family. In terms of assembly, component of the small ribosomal subunit. Mature ribosomes consist of a small (40S) and a large (60S) subunit. The 40S subunit contains about 33 different proteins and 1 molecule of RNA (18S). The 60S subunit contains about 49 different proteins and 3 molecules of RNA (28S, 5.8S and 5S).

It localises to the cytoplasm. Has an essential role in oogenesis. This is Small ribosomal subunit protein eS1 from Anopheles gambiae (African malaria mosquito).